The sequence spans 143 residues: FIS1-related protein fis-1 (143 aa).

A helical transmembrane segment spans residues Leu-121–Phe-141.

Belongs to the FIS1 family.

The protein localises to the mitochondrion outer membrane. The protein resides in the peroxisome membrane. In terms of biological role, involved in the fragmentation of the mitochondrial network. Involved in perinuclear clustering of the mitochondrial network. Plays a role in removal of ultraviolet C radiation-induced mitochondrial DNA damage. May act, redundantly with fis-2, downstream of mitochondrial fission, before the fission products participate in either mitochondrial homeostasis, mitophagy, or apoptosis. The sequence is that of FIS1-related protein fis-1 from Caenorhabditis elegans.